Here is a 211-residue protein sequence, read N- to C-terminus: MTDLLTLEAEVRTDLGKGASRRLRHANKVPAILYGENEEPISLTLEHKNVFRAQQEEAFYSQVLTLNIAGKPVECLIKDMQRHPFKQVVMHLDFLRIDAKHAVHANAPIHFLNEDEAAKTGANISHHMNEIAITCLPKDLPEFISIDLAGLELGQTIHLSDVTFPAGVTSDELAKGEDHDLAVVSANAPKAAKVSTDDEAAAPAEEAPAAE.

Residues 188–211 (APKAAKVSTDDEAAAPAEEAPAAE) form a disordered region. The span at 201 to 211 (AAPAEEAPAAE) shows a compositional bias: low complexity.

This sequence belongs to the bacterial ribosomal protein bL25 family. CTC subfamily. Part of the 50S ribosomal subunit; part of the 5S rRNA/L5/L18/L25 subcomplex. Contacts the 5S rRNA. Binds to the 5S rRNA independently of L5 and L18.

Its function is as follows. This is one of the proteins that binds to the 5S RNA in the ribosome where it forms part of the central protuberance. The protein is Large ribosomal subunit protein bL25 of Colwellia psychrerythraea (strain 34H / ATCC BAA-681) (Vibrio psychroerythus).